Consider the following 158-residue polypeptide: Toxin Tse2 (158 aa).

In terms of assembly, forms a heterotetramer with Tsi2 consisting of two Tse2 dimers and two Tsi2 dimers. Formation of the complex inactivates Tse2 enzymatic activity.

It is found in the secreted. In terms of biological role, toxin secreted by the H1 type VI (H1-T6SS) secretion system into the cytoplasm of recipient cells. Acts likely as a NAD-dependent cytotoxin towards both prokaryotic and eukaryotic cells. The sequence is that of Toxin Tse2 from Pseudomonas aeruginosa (strain ATCC 15692 / DSM 22644 / CIP 104116 / JCM 14847 / LMG 12228 / 1C / PRS 101 / PAO1).